We begin with the raw amino-acid sequence, 403 residues long: Methylthioribose-1-phosphate isomerase (403 aa).

Residue D277 is the Proton donor of the active site.

Belongs to the eIF-2B alpha/beta/delta subunits family. MtnA subfamily.

The protein resides in the cytoplasm. Its subcellular location is the nucleus. It catalyses the reaction 5-(methylsulfanyl)-alpha-D-ribose 1-phosphate = 5-(methylsulfanyl)-D-ribulose 1-phosphate. It functions in the pathway amino-acid biosynthesis; L-methionine biosynthesis via salvage pathway; L-methionine from S-methyl-5-thio-alpha-D-ribose 1-phosphate: step 1/6. In terms of biological role, catalyzes the interconversion of methylthioribose-1-phosphate (MTR-1-P) into methylthioribulose-1-phosphate (MTRu-1-P). The sequence is that of Methylthioribose-1-phosphate isomerase from Lodderomyces elongisporus (strain ATCC 11503 / CBS 2605 / JCM 1781 / NBRC 1676 / NRRL YB-4239) (Yeast).